Consider the following 375-residue polypeptide: MYLSTLQLGAFRNYDSLTIHFSPGLNVLYGDNAQGKTNLLEAIHFLATGRSHRTSRDPDMVQEGREELLARAAVVRRTGTIELELRCGLQTRKQLKINGIAERKIARLVGSLAVVLFSPDDLQLLKGPPSGRRRFLDLELSQISQTYLHHLMAYNRLVAQRNTLLKQPVIDEGLMAVYDEQLVETGAQLVVRRAEAVRRLSPIASRYHRMLAEDREDLELAYQSQGVGDDGAADLETVRRRLERELARLRSEERRRQVTLVGPHRDDVGFWVAGRDARLYASQGQQRTAVLALKLAELEFMSEEIGEPPLLLLDDVASELDPHRRHYLLSAVREGVQSFITCTDLEDLMVREWPADHRLFRVRAGTVVLDDRGLS.

30-37 contributes to the ATP binding site; the sequence is GDNAQGKT.

This sequence belongs to the RecF family.

The protein resides in the cytoplasm. Functionally, the RecF protein is involved in DNA metabolism; it is required for DNA replication and normal SOS inducibility. RecF binds preferentially to single-stranded, linear DNA. It also seems to bind ATP. The chain is DNA replication and repair protein RecF from Symbiobacterium thermophilum (strain DSM 24528 / JCM 14929 / IAM 14863 / T).